The primary structure comprises 271 residues: MRAVFGCAIAVVGIAGSVVAGPADIHLVAAKQSYGFAVASVLPTRGQVVGVAHPVVVTFSAPITNPANRHAAERAVEVKSTPAMTGKFEWLDNDVVQWVPDRFWPAHSTVELSVGSLSSDFKTGPAVVGVASISQHTFTVSIDGVEEGPPPPLPAPHHRVHFGEDGVMPASMGRPEYPTPVGSYTVLSKERSVIMDSSSVGIPVDDPDGYRLSVDYAVRITSRGLYVHSAPWALPALGLENVSHGCISLSREDAEWYYNAVDIGDPVIVQE.

In terms of domain architecture, L,D-TPase catalytic spans 127-270 (VVGVASISQH…VDIGDPVIVQ (144 aa)). The active-site Proton donor/acceptor is the His228. The Nucleophile role is filled by Cys246.

It participates in cell wall biogenesis; peptidoglycan biosynthesis. Its activity is regulated as follows. Is irreversibly inactivated by the beta-lactam carbapenems via the formation of a covalent adduct resulting from acylation of the catalytic Cys. Imipenem is the most efficient drug for in vitro LdtMt3/Rv1433 inactivation. In terms of biological role, probable L,D-transpeptidase that may perform as-yet-unknown cross-linking reactions in M.tuberculosis. Is not able to generate 3-&gt;3 cross-links in peptidoglycan, using tetrapeptide stems as acyl donor substrates. May function in the anchoring of proteins to peptidoglycan. This is Probable L,D-transpeptidase 3 from Mycobacterium tuberculosis (strain ATCC 25618 / H37Rv).